We begin with the raw amino-acid sequence, 183 residues long: Capsid protein (183 aa).

Residues 136 to 183 form a disordered region; sequence NAPILSTLPETTVVRRRGRSPRRRTPSPRRRRSQSPRRRRSKSRESQC. Residues 149-177 are compositionally biased toward basic residues; the sequence is VRRRGRSPRRRTPSPRRRRSQSPRRRRSK. Residues S155, S162, and S170 each carry the phosphoserine; by host modification. A 1; half-length repeat occupies 155 to 160; it reads SPRRRT. A 3 X 7 AA repeats of S-P-R-R-R-[PR]-S region spans residues 155-176; sequence SPRRRTPSPRRRRSQSPRRRRS. Residues 158–175 carry the Bipartite nuclear localization signal motif; it reads RRTPSPRRRRSQSPRRRR. A run of 2 repeats spans residues 162 to 168 and 170 to 176. An RNA binding region spans residues 177–183; sequence KSRESQC.

Belongs to the orthohepadnavirus core antigen family. Homodimerizes, then multimerizes. Interacts with cytosol exposed regions of viral L glycoprotein present in the reticulum-to-Golgi compartment. Interacts with human FLNB. Phosphorylated form interacts with host importin alpha; this interaction depends on the exposure of the NLS, which itself depends upon genome maturation and/or phosphorylation of the capsid protein. Interacts with host NUP153. In terms of processing, phosphorylated by host SRPK1, SRPK2, and maybe protein kinase C or GAPDH. Phosphorylation is critical for pregenomic RNA packaging. Protein kinase C phosphorylation is stimulated by HBx protein and may play a role in transport of the viral genome to the nucleus at the late step during the viral replication cycle.

The protein resides in the virion. It localises to the host cytoplasm. Functionally, self assembles to form an icosahedral capsid. Most capsids appear to be large particles with an icosahedral symmetry of T=4 and consist of 240 copies of capsid protein, though a fraction forms smaller T=3 particles consisting of 180 capsid proteins. Entering capsids are transported along microtubules to the nucleus. Phosphorylation of the capsid is thought to induce exposure of nuclear localization signal in the C-terminal portion of the capsid protein that allows binding to the nuclear pore complex via the importin (karyopherin-) alpha and beta. Capsids are imported in intact form through the nuclear pore into the nuclear basket, where it probably binds NUP153. Only capsids that contain the mature viral genome can release the viral DNA and capsid protein into the nucleoplasm. Immature capsids get stuck in the basket. Capsids encapsulate the pre-genomic RNA and the P protein. Pre-genomic RNA is reverse-transcribed into DNA while the capsid is still in the cytoplasm. The capsid can then either be directed to the nucleus, providing more genomes for transcription, or bud through the endoplasmic reticulum to provide new virions. This Hepatitis B virus genotype C subtype ar (isolate Japan/S-207/1988) (HBV-C) protein is Capsid protein.